A 165-amino-acid chain; its full sequence is RNA polymerase II transcriptional coactivator KELP (165 aa).

In terms of domain architecture, DEK-C spans 3 to 60 (KETKEKIEKTVIEILSESDMKEITEFKVRKLASEKLAIDLSEKSHKAFVRSVVEKFLD). The interval 66 to 93 (EYENSQVNKEEEDGDKDCGKGNKEFDDD) is disordered.

This sequence belongs to the transcriptional coactivator PC4 family.

It localises to the nucleus. General coactivator that functions cooperatively with TAFs and mediates functional interactions between upstream activators and the general transcriptional machinery. Binds single-stranded DNA. The polypeptide is RNA polymerase II transcriptional coactivator KELP (KELP) (Arabidopsis thaliana (Mouse-ear cress)).